Here is an 80-residue protein sequence, read N- to C-terminus: Cell division activator CedA (80 aa).

It belongs to the CedA family.

Functionally, activates the cell division inhibited by chromosomal DNA over-replication. The sequence is that of Cell division activator CedA from Escherichia coli (strain SMS-3-5 / SECEC).